The primary structure comprises 398 residues: Phosphoglycerate kinase (398 aa).

Substrate is bound by residues 20-22 (DLN), Arg-35, 58-61 (HLGR), Arg-118, and Arg-155. Residues Lys-206, Gly-295, Glu-326, and 354–357 (GGDS) contribute to the ATP site.

It belongs to the phosphoglycerate kinase family. Monomer.

The protein resides in the cytoplasm. The enzyme catalyses (2R)-3-phosphoglycerate + ATP = (2R)-3-phospho-glyceroyl phosphate + ADP. The protein operates within carbohydrate degradation; glycolysis; pyruvate from D-glyceraldehyde 3-phosphate: step 2/5. The sequence is that of Phosphoglycerate kinase from Onion yellows phytoplasma (strain OY-M).